The following is a 1313-amino-acid chain: Inactive protein tyrosine kinase pTKL (1313 aa).

MORN repeat units follow at residues 20 to 42 (YAGD…ENGN) and 45 to 63 (FGHF…IDKN). 7 N-linked (GlcNAc...) asparagine glycosylation sites follow: Asn63, Asn131, Asn178, Asn208, Asn254, Asn260, and Asn288. The region spanning 300-365 (WNKEQVAQWL…LQLIKNLRVT (66 aa)) is the SAM domain. Asn466, Asn516, Asn525, Asn528, and Asn534 each carry an N-linked (GlcNAc...) asparagine glycan. Residues 569 to 580 (EPIKPNKEKEEN) show a composition bias toward basic and acidic residues. The segment at 569–631 (EPIKPNKEKE…SEKSSETSSE (63 aa)) is disordered. Positions 586–604 (PIINSKNETNLLNDSNPTK) are enriched in polar residues. N-linked (GlcNAc...) asparagine glycans are attached at residues Asn592, Asn598, Asn661, Asn678, Asn729, Asn735, and Asn749. ATP is bound at residue Lys782. N-linked (GlcNAc...) asparagine glycosylation is found at Asn790, Asn868, Asn940, Asn983, and Asn1000. The 333-residue stretch at 962–1294 (FRNKNNILCG…FDRILIEISM (333 aa)) folds into the Protein kinase domain. The short motif at 1052-1055 (KILF) is the RVxF motif element. 2 N-linked (GlcNAc...) asparagine glycosylation sites follow: Asn1191 and Asn1198.

This sequence belongs to the protein kinase superfamily. TKL Ser/Thr protein kinase family.

Its subcellular location is the parasitophorous vacuole. The protein localises to the host cell membrane. It localises to the host cytoplasm. It is found in the host cytoskeleton. This Plasmodium berghei (strain Anka) protein is Inactive protein tyrosine kinase pTKL.